The sequence spans 236 residues: ATP-dependent dethiobiotin synthetase BioD (236 aa).

Thr19 is a binding site for Mg(2+). Lys40 is an active-site residue. Asp61 and Glu122 together coordinate Mg(2+). ATP-binding positions include Asp61, 122-125, 182-183, and 211-213; these read EGVG, NT, and PRL.

Belongs to the dethiobiotin synthetase family. In terms of assembly, homodimer. The cofactor is Mg(2+).

It is found in the cytoplasm. The catalysed reaction is (7R,8S)-7,8-diammoniononanoate + CO2 + ATP = (4R,5S)-dethiobiotin + ADP + phosphate + 3 H(+). Its pathway is cofactor biosynthesis; biotin biosynthesis; biotin from 7,8-diaminononanoate: step 1/2. Its function is as follows. Catalyzes a mechanistically unusual reaction, the ATP-dependent insertion of CO2 between the N7 and N8 nitrogen atoms of 7,8-diaminopelargonic acid (DAPA, also called 7,8-diammoniononanoate) to form a ureido ring. The protein is ATP-dependent dethiobiotin synthetase BioD of Janthinobacterium sp. (strain Marseille) (Minibacterium massiliensis).